The primary structure comprises 786 residues: Exo-beta-D-glucosaminidase (786 aa).

Residues Y53, 102 to 103 (GE), 178 to 179 (DE), E306, E347, and Y379 each bind substrate. Residue E179 is the Proton donor of the active site. The Nucleophile role is filled by E347.

Belongs to the glycosyl hydrolase 35 family. Homodimer.

The protein localises to the cytoplasm. It carries out the reaction beta-D-glucosaminyl-(1-&gt;4)-N-acetyl-D-glucosamine + H2O = D-glucosamine + N-acetyl-D-glucosamine. The protein operates within glycan degradation; chitin degradation. Exo-type enzyme that specifically cleaves the non-reducing terminal glycosidic bond of chitooligosaccharides. Catalyzes the hydrolysis of GlcN-GlcNAc to glucosamine (GlcN) and N-acetylglucosamine (GlcNAc). Involved in chitin degradation. Can also hydrolyze reduced chitobiose (GlcN2OH) and chitooligosaccharides of various chain lengths. The protein is Exo-beta-D-glucosaminidase of Thermococcus kodakarensis (strain ATCC BAA-918 / JCM 12380 / KOD1) (Pyrococcus kodakaraensis (strain KOD1)).